The following is a 169-amino-acid chain: 3-hydroxyacyl-[acyl-carrier-protein] dehydratase FabZ (169 aa).

Histidine 74 is a catalytic residue.

This sequence belongs to the thioester dehydratase family. FabZ subfamily.

The protein resides in the cytoplasm. It catalyses the reaction a (3R)-hydroxyacyl-[ACP] = a (2E)-enoyl-[ACP] + H2O. Its function is as follows. Involved in unsaturated fatty acids biosynthesis. Catalyzes the dehydration of short chain beta-hydroxyacyl-ACPs and long chain saturated and unsaturated beta-hydroxyacyl-ACPs. In Gluconobacter oxydans (strain 621H) (Gluconobacter suboxydans), this protein is 3-hydroxyacyl-[acyl-carrier-protein] dehydratase FabZ.